The following is a 204-amino-acid chain: Protein GrpE (204 aa).

Positions Met1–Lys52 are disordered. Basic and acidic residues-rich tracts occupy residues Pro7 to Glu22 and Met38 to Lys52.

It belongs to the GrpE family. Homodimer.

The protein resides in the cytoplasm. Functionally, participates actively in the response to hyperosmotic and heat shock by preventing the aggregation of stress-denatured proteins, in association with DnaK and GrpE. It is the nucleotide exchange factor for DnaK and may function as a thermosensor. Unfolded proteins bind initially to DnaJ; upon interaction with the DnaJ-bound protein, DnaK hydrolyzes its bound ATP, resulting in the formation of a stable complex. GrpE releases ADP from DnaK; ATP binding to DnaK triggers the release of the substrate protein, thus completing the reaction cycle. Several rounds of ATP-dependent interactions between DnaJ, DnaK and GrpE are required for fully efficient folding. The chain is Protein GrpE from Coxiella burnetii (strain Dugway 5J108-111).